Consider the following 355-residue polypeptide: uncharacterized protein (355 aa).

A J domain is found at 9–75 (DYYDILNISV…KLREKYDKLG (67 aa)).

It belongs to the DnaJ family.

It localises to the cytoplasm. This is an uncharacterized protein from Schizosaccharomyces pombe (strain 972 / ATCC 24843) (Fission yeast).